A 307-amino-acid polypeptide reads, in one-letter code: Bifunctional protein FolD (307 aa).

Residues 165 to 167 (GRS), Ser-190, and Ile-231 contribute to the NADP(+) site.

Belongs to the tetrahydrofolate dehydrogenase/cyclohydrolase family. As to quaternary structure, homodimer.

It catalyses the reaction (6R)-5,10-methylene-5,6,7,8-tetrahydrofolate + NADP(+) = (6R)-5,10-methenyltetrahydrofolate + NADPH. It carries out the reaction (6R)-5,10-methenyltetrahydrofolate + H2O = (6R)-10-formyltetrahydrofolate + H(+). It functions in the pathway one-carbon metabolism; tetrahydrofolate interconversion. Catalyzes the oxidation of 5,10-methylenetetrahydrofolate to 5,10-methenyltetrahydrofolate and then the hydrolysis of 5,10-methenyltetrahydrofolate to 10-formyltetrahydrofolate. This is Bifunctional protein FolD from Koribacter versatilis (strain Ellin345).